The chain runs to 415 residues: METTATILHADLDAFYASVEQLLDPSLRGKPIAVGGGVVLAASYEARAFGVRGGMPGRKARELCPQLIFVGGNFSHYQRLGDAAIKVLDDFTPVVERISIDEAFADVAGCTHLFGQPRDIATAIRHRVRAELGLPISIGVARTKHLAKIASQVAKPDGLVVVDPGTELDFLHDLPVSLMWGVGPATKSRLAEIGIQTIGELARTHSGALTRLLGPAAGEKLAALAWNRDPRKLETRRRAHSAGAQSALGQKPAVARVIVPTLLHLADRVASRLRAKARPGRTVTVRVRFADLSAVTRSITLDQPISATTMLAEIAGDLVRGVLADHPREKTISLLAISVSHLEESAELQLDLPLGLADEKRRPGSKKGLARFGADRAIDKIRERFGKQAVGYGTVALEAARSVPDEFRELAEKEL.

In terms of domain architecture, UmuC spans 7–183; it reads ILHADLDAFY…LPVSLMWGVG (177 aa). 2 residues coordinate Mg(2+): Asp11 and Asp101. The active site involves Glu102.

This sequence belongs to the DNA polymerase type-Y family. As to quaternary structure, monomer. It depends on Mg(2+) as a cofactor.

It is found in the cytoplasm. The catalysed reaction is DNA(n) + a 2'-deoxyribonucleoside 5'-triphosphate = DNA(n+1) + diphosphate. Functionally, poorly processive, error-prone DNA polymerase involved in untargeted mutagenesis. Copies undamaged DNA at stalled replication forks, which arise in vivo from mismatched or misaligned primer ends. These misaligned primers can be extended by PolIV. Exhibits no 3'-5' exonuclease (proofreading) activity. May be involved in translesional synthesis, in conjunction with the beta clamp from PolIII. This chain is DNA polymerase IV 2 (dinB2), found in Mesorhizobium japonicum (strain LMG 29417 / CECT 9101 / MAFF 303099) (Mesorhizobium loti (strain MAFF 303099)).